The following is a 409-amino-acid chain: Argininosuccinate synthase (409 aa).

ATP contacts are provided by residues 10–18 (AYSGGLDTS) and A37. Residues Y90 and S95 each contribute to the L-citrulline site. G120 lines the ATP pocket. 3 residues coordinate L-aspartate: T122, N126, and D127. N126 serves as a coordination point for L-citrulline. L-citrulline contacts are provided by R130, S182, S191, E267, and Y279.

The protein belongs to the argininosuccinate synthase family. Type 1 subfamily. In terms of assembly, homotetramer.

It is found in the cytoplasm. It carries out the reaction L-citrulline + L-aspartate + ATP = 2-(N(omega)-L-arginino)succinate + AMP + diphosphate + H(+). Its pathway is amino-acid biosynthesis; L-arginine biosynthesis; L-arginine from L-ornithine and carbamoyl phosphate: step 2/3. This chain is Argininosuccinate synthase, found in Thiobacillus denitrificans (strain ATCC 25259 / T1).